The primary structure comprises 219 residues: uncharacterized protein (219 aa).

5 helical membrane passes run 14–34 (LVYS…FGVL), 37–57 (TLGF…AGAS), 123–143 (FLLG…ALGV), 155–175 (VYSA…LPNL), and 189–209 (VALA…AALA).

The protein belongs to the AzlC family.

Its subcellular location is the cell membrane. This is an uncharacterized protein from Archaeoglobus fulgidus (strain ATCC 49558 / DSM 4304 / JCM 9628 / NBRC 100126 / VC-16).